The primary structure comprises 285 residues: V-set and transmembrane domain-containing protein 2B (285 aa).

The signal sequence occupies residues 1 to 28 (MEQRNRLGALGYLPPLLLHALLLFVADA). The Ig-like V-type domain occupies 29–143 (AFTEVPKDVT…DDDTQEHKAQ (115 aa)). The Extracellular portion of the chain corresponds to 29 to 263 (AFTEVPKDVT…HGSGTGRSYT (235 aa)). A disulfide bond links C49 and C127. Residues 161-226 (EAVSHIQSSG…EAAAASAAHT (66 aa)) form a disordered region. Low complexity-rich tracts occupy residues 177-189 (ASAANANNAGAAS) and 208-226 (PAAIDPAVPEAAAASAAHT). The helical transmembrane segment at 264-284 (TDPLLSLLLLALHKFLRLLLG) threads the bilayer. H285 is a topological domain (cytoplasmic).

It localises to the membrane. The polypeptide is V-set and transmembrane domain-containing protein 2B (VSTM2B) (Homo sapiens (Human)).